The chain runs to 376 residues: N-acetyldiaminopimelate deacetylase (376 aa).

The active site involves aspartate 69. Residue glutamate 128 is the Proton acceptor of the active site.

Belongs to the peptidase M20A family. N-acetyldiaminopimelate deacetylase subfamily.

It catalyses the reaction N-acetyl-(2S,6S)-2,6-diaminopimelate + H2O = (2S,6S)-2,6-diaminopimelate + acetate. It functions in the pathway amino-acid biosynthesis; L-lysine biosynthesis via DAP pathway; LL-2,6-diaminopimelate from (S)-tetrahydrodipicolinate (acetylase route): step 3/3. Its function is as follows. Catalyzes the conversion of N-acetyl-diaminopimelate to diaminopimelate and acetate. In Bacillus cereus (strain ATCC 14579 / DSM 31 / CCUG 7414 / JCM 2152 / NBRC 15305 / NCIMB 9373 / NCTC 2599 / NRRL B-3711), this protein is N-acetyldiaminopimelate deacetylase.